The primary structure comprises 840 residues: Lysine-specific demethylase JMJ27 (840 aa).

The span at 1-10 (MEKMRGKRIR) shows a compositional bias: basic residues. A disordered region spans residues 1-52 (MEKMRGKRIRPRDSGELVEDGRSESERKTRKKENDVVSKGRIGRGRGRGEVS). A compositionally biased stretch (basic and acidic residues) spans 11–38 (PRDSGELVEDGRSESERKTRKKENDVVS). The Zn(2+) site is built by C80, C83, C95, C98, C104, C107, C124, and C127. An RING-type; degenerate zinc finger spans residues 80 to 127 (CHHCKILTSESDLIFCSKCNKKCYCFDCIKRSYSERTHEEVRAACPFC). Residues 502-798 (PKSGILNLAT…ECLRLTQEFR (297 aa)) enclose the JmjC domain. Fe cation-binding residues include H546 and D548. The segment at 594-678 (KEASELENKS…ETDGNTNERS (85 aa)) is disordered. Basic and acidic residues predominate over residues 595-620 (EASELENKSMKEVDESKKDLKDKAAN). Polar residues predominate over residues 621–631 (EEQSNNSSRPS). The span at 635-646 (EAEKVIISKEDN) shows a compositional bias: basic and acidic residues. Over residues 647–659 (PTQPAVSTSVESI) the composition is skewed to polar residues. A compositionally biased stretch (basic and acidic residues) spans 660-678 (QEQKLDAPKETDGNTNERS). H766 contributes to the Fe cation binding site.

Belongs to the JARID1 histone demethylase family. As to quaternary structure, interacts with RPN1A. It depends on Fe(2+) as a cofactor. As to expression, expressed in seedlings, inflorescences, flowers and siliques, and, at low levels, in roots, leaves (including vascular bundles) and stems. Particularly observed in stomatal guard cells.

The protein localises to the nucleus. It is found in the cytoplasm. The enzyme catalyses N(6),N(6)-dimethyl-L-lysyl(9)-[histone H3] + 2-oxoglutarate + O2 = N(6)-methyl-L-lysyl(9)-[histone H3] + formaldehyde + succinate + CO2. It catalyses the reaction N(6)-methyl-L-lysyl(9)-[histone H3] + 2-oxoglutarate + O2 = L-lysyl(9)-[histone H3] + formaldehyde + succinate + CO2. The catalysed reaction is N(6),N(6)-dimethyl-L-lysyl(9)-[histone H3] + 2 2-oxoglutarate + 2 O2 = L-lysyl(9)-[histone H3] + 2 formaldehyde + 2 succinate + 2 CO2. In terms of biological role, histone demethylase that demethylates 'Lys-9' (H3K9me) of histone H3 with a specific activity for H3K9me1 and H3K9me2. No activity on H3K4, H3K27, H3K36, H3R2 and H4R3 methyl marks, but weak activity on H3K9me3. Involved in regulation of gene expression. Regulates flowering time by repressing the major flowering regulator CONSTANS (CO) and promoting FLOWERING LOCUS C (FLC). Exhibits a positive impact on abscisic acid- (ABA), hydrogen peroxide- (H(2)O(2)) and calcium- (Ca(2+)) induced stomatal closure. Promotes stomatal-closure-dependent drought-stress responses through its histone demethylase activity toward at least GOLS2 and RD20 loci, thus protecting them from silencing by removing H3K9me2 marks in drought conditions. Required for plant defenses leading to resistance against the virulent bacterial pathogen Pseudomonas syringae pv. tomato DC3000 (Pst DC3000) via a negative regulation of WRKY25 (a repressor of defense) and by triggering the expression of several pathogenesis-related (PR) proteins (e.g. PR1, PR3, PR4 and PR5). The protein is Lysine-specific demethylase JMJ27 of Arabidopsis thaliana (Mouse-ear cress).